Consider the following 198-residue polypeptide: MTERSLNNLILASSSKRRIALLKQINIEPGLILPADIDEAPLKKELPKDYSIRMAKSKAEKIQSSNPNYFVLGVDTVVACGRRILLKAENVEQAEKCIRLLSGRRHRVYTSVCLLTPDQSKQHIRTVVTIVKFKRLSEQEIKYYLASEEWKNRAGGCNIQGLAGVFVLFLRGSYSSVIGLPLHETYCLLSNYFNFNLY.

D75 functions as the Proton acceptor in the catalytic mechanism.

It belongs to the Maf family. YhdE subfamily. A divalent metal cation is required as a cofactor.

It is found in the cytoplasm. It catalyses the reaction dTTP + H2O = dTMP + diphosphate + H(+). The enzyme catalyses UTP + H2O = UMP + diphosphate + H(+). In terms of biological role, nucleoside triphosphate pyrophosphatase that hydrolyzes dTTP and UTP. May have a dual role in cell division arrest and in preventing the incorporation of modified nucleotides into cellular nucleic acids. This chain is dTTP/UTP pyrophosphatase, found in Wolbachia sp. subsp. Drosophila simulans (strain wRi).